Here is a 425-residue protein sequence, read N- to C-terminus: Serine--tRNA ligase (425 aa).

Thr230–Glu232 contributes to the L-serine binding site. Arg261–Glu263 contributes to the ATP binding site. Glu284 contacts L-serine. Position 348-351 (Glu348–Ser351) interacts with ATP. Ser384 is a binding site for L-serine.

It belongs to the class-II aminoacyl-tRNA synthetase family. Type-1 seryl-tRNA synthetase subfamily. In terms of assembly, homodimer. The tRNA molecule binds across the dimer.

Its subcellular location is the cytoplasm. It carries out the reaction tRNA(Ser) + L-serine + ATP = L-seryl-tRNA(Ser) + AMP + diphosphate + H(+). The catalysed reaction is tRNA(Sec) + L-serine + ATP = L-seryl-tRNA(Sec) + AMP + diphosphate + H(+). The protein operates within aminoacyl-tRNA biosynthesis; selenocysteinyl-tRNA(Sec) biosynthesis; L-seryl-tRNA(Sec) from L-serine and tRNA(Sec): step 1/1. Functionally, catalyzes the attachment of serine to tRNA(Ser). Is also able to aminoacylate tRNA(Sec) with serine, to form the misacylated tRNA L-seryl-tRNA(Sec), which will be further converted into selenocysteinyl-tRNA(Sec). This Streptococcus pyogenes serotype M28 (strain MGAS6180) protein is Serine--tRNA ligase.